Reading from the N-terminus, the 293-residue chain is Cytidine deaminase (293 aa).

CMP/dCMP-type deaminase domains lie at 47–166 (DDRA…FGPA) and 186–293 (VSDD…YQAV). Residue 88–90 (NME) coordinates substrate. His-101 is a Zn(2+) binding site. Glu-103 acts as the Proton donor in catalysis. Zn(2+)-binding residues include Cys-128 and Cys-131.

This sequence belongs to the cytidine and deoxycytidylate deaminase family. Homodimer. Zn(2+) is required as a cofactor.

The catalysed reaction is cytidine + H2O + H(+) = uridine + NH4(+). It catalyses the reaction 2'-deoxycytidine + H2O + H(+) = 2'-deoxyuridine + NH4(+). In terms of biological role, this enzyme scavenges exogenous and endogenous cytidine and 2'-deoxycytidine for UMP synthesis. The polypeptide is Cytidine deaminase (Aeromonas hydrophila subsp. hydrophila (strain ATCC 7966 / DSM 30187 / BCRC 13018 / CCUG 14551 / JCM 1027 / KCTC 2358 / NCIMB 9240 / NCTC 8049)).